Reading from the N-terminus, the 357-residue chain is Quinolinate synthase (357 aa).

His-50 and Ser-71 together coordinate iminosuccinate. Cys-116 is a [4Fe-4S] cluster binding site. Residues 142-144 (YAN) and Ser-159 each bind iminosuccinate. Cys-203 is a binding site for [4Fe-4S] cluster. Iminosuccinate is bound by residues 229 to 231 (HPE) and Thr-246. Cys-300 is a binding site for [4Fe-4S] cluster.

It belongs to the quinolinate synthase family. Type 1 subfamily. It depends on [4Fe-4S] cluster as a cofactor.

The protein resides in the cytoplasm. The catalysed reaction is iminosuccinate + dihydroxyacetone phosphate = quinolinate + phosphate + 2 H2O + H(+). It participates in cofactor biosynthesis; NAD(+) biosynthesis; quinolinate from iminoaspartate: step 1/1. Functionally, catalyzes the condensation of iminoaspartate with dihydroxyacetone phosphate to form quinolinate. This is Quinolinate synthase from Shewanella sp. (strain MR-4).